The sequence spans 516 residues: Anthranilate synthase component 1 (516 aa).

L-tryptophan is bound by residues S56 and 283 to 285; that span reads PYM. 324–325 contributes to the chorismate binding site; it reads GT. E351 is a Mg(2+) binding site. Chorismate-binding positions include Y439, R459, 473-475, and G475; that span reads GGG. Position 488 (E488) interacts with Mg(2+).

This sequence belongs to the anthranilate synthase component I family. In terms of assembly, heterotetramer consisting of two non-identical subunits: a beta subunit (TrpG) and a large alpha subunit (TrpE). Mg(2+) is required as a cofactor.

It catalyses the reaction chorismate + L-glutamine = anthranilate + pyruvate + L-glutamate + H(+). It participates in amino-acid biosynthesis; L-tryptophan biosynthesis; L-tryptophan from chorismate: step 1/5. Feedback inhibited by tryptophan. Functionally, part of a heterotetrameric complex that catalyzes the two-step biosynthesis of anthranilate, an intermediate in the biosynthesis of L-tryptophan. In the first step, the glutamine-binding beta subunit (TrpG) of anthranilate synthase (AS) provides the glutamine amidotransferase activity which generates ammonia as a substrate that, along with chorismate, is used in the second step, catalyzed by the large alpha subunit of AS (TrpE) to produce anthranilate. In the absence of TrpG, TrpE can synthesize anthranilate directly from chorismate and high concentrations of ammonia. In Mycobacterium bovis (strain ATCC BAA-935 / AF2122/97), this protein is Anthranilate synthase component 1 (trpE).